A 32-amino-acid polypeptide reads, in one-letter code: Cytochrome b6-f complex subunit 7 (32 aa).

Residues 5–25 traverse the membrane as a helical segment; it reads IFGTAAIFWVLIPIGLVGGAL.

The protein belongs to the PetM family. In terms of assembly, the 4 large subunits of the cytochrome b6-f complex are cytochrome b6, subunit IV (17 kDa polypeptide, PetD), cytochrome f and the Rieske protein, while the 4 small subunits are PetG, PetL, PetM and PetN. The complex functions as a dimer.

It localises to the cellular thylakoid membrane. Component of the cytochrome b6-f complex, which mediates electron transfer between photosystem II (PSII) and photosystem I (PSI), cyclic electron flow around PSI, and state transitions. In Synechococcus sp. (strain CC9902), this protein is Cytochrome b6-f complex subunit 7.